A 564-amino-acid polypeptide reads, in one-letter code: Kelch repeat and BTB domain-containing protein 1 (564 aa).

A BTB domain is found at 21–88 (CDIDIVINDE…IYGIPLSLTN (68 aa)). Residues 123-219 (CIDFYIYADK…SLLSPQVIKS (97 aa)) form the BACK domain. Kelch repeat units lie at residues 252 to 297 (IELI…VLDN), 298 to 346 (IIYM…ADDE), 347 to 395 (YIYC…MLNG), 397 to 441 (IYVI…VHAG), 442 to 492 (KIYI…SVHN), and 494 to 539 (LYVG…CEPI).

In terms of assembly, interacts (via BTB domain) with host CUL3.

The protein resides in the host cytoplasm. Functionally, probable substrate-specific adapter of CUL3-containing E3 ubiquitin-protein ligases which mediate the ubiquitination and subsequent proteasomal degradation of host target proteins. The sequence is that of Kelch repeat and BTB domain-containing protein 1 (KBTB1) from Camelus.